A 182-amino-acid polypeptide reads, in one-letter code: UPF0200 protein Mthe_1012 (182 aa).

ATP is bound at residue Gly8–Ser15.

This sequence belongs to the UPF0200 family.

This chain is UPF0200 protein Mthe_1012, found in Methanothrix thermoacetophila (strain DSM 6194 / JCM 14653 / NBRC 101360 / PT) (Methanosaeta thermophila).